The primary structure comprises 423 residues: Tegument protein UL43 (423 aa).

Polar residues predominate over residues methionine 1–serine 12. The tract at residues methionine 1–arginine 46 is disordered.

It belongs to the herpesviridae US22 family.

The protein localises to the virion tegument. This chain is Tegument protein UL43 (UL43), found in Homo sapiens (Human).